We begin with the raw amino-acid sequence, 219 residues long: tRNA (guanine-N(7)-)-methyltransferase (219 aa).

4 residues coordinate S-adenosyl-L-methionine: Glu46, Glu71, Asp100, and Asp122. Residue Asp122 is part of the active site. Lys126 is a binding site for substrate. Positions 128–133 are interaction with RNA; sequence KHEKRR. Substrate is bound by residues Asp158 and 199 to 202; that span reads TEYE.

The protein belongs to the class I-like SAM-binding methyltransferase superfamily. TrmB family.

The catalysed reaction is guanosine(46) in tRNA + S-adenosyl-L-methionine = N(7)-methylguanosine(46) in tRNA + S-adenosyl-L-homocysteine. It functions in the pathway tRNA modification; N(7)-methylguanine-tRNA biosynthesis. In terms of biological role, catalyzes the formation of N(7)-methylguanine at position 46 (m7G46) in tRNA. In Oenococcus oeni (strain ATCC BAA-331 / PSU-1), this protein is tRNA (guanine-N(7)-)-methyltransferase.